The following is a 294-amino-acid chain: Ribosomal protein L11 methyltransferase (294 aa).

Residues threonine 146, glycine 167, aspartate 189, and asparagine 231 each contribute to the S-adenosyl-L-methionine site.

It belongs to the methyltransferase superfamily. PrmA family.

It localises to the cytoplasm. The enzyme catalyses L-lysyl-[protein] + 3 S-adenosyl-L-methionine = N(6),N(6),N(6)-trimethyl-L-lysyl-[protein] + 3 S-adenosyl-L-homocysteine + 3 H(+). In terms of biological role, methylates ribosomal protein L11. The protein is Ribosomal protein L11 methyltransferase of Aliivibrio salmonicida (strain LFI1238) (Vibrio salmonicida (strain LFI1238)).